The following is a 422-amino-acid chain: Tryptophan synthase beta chain 1 (422 aa).

Position 107 is an N6-(pyridoxal phosphate)lysine (Lys-107).

Belongs to the TrpB family. Tetramer of two alpha and two beta chains. Pyridoxal 5'-phosphate is required as a cofactor.

The catalysed reaction is (1S,2R)-1-C-(indol-3-yl)glycerol 3-phosphate + L-serine = D-glyceraldehyde 3-phosphate + L-tryptophan + H2O. The protein operates within amino-acid biosynthesis; L-tryptophan biosynthesis; L-tryptophan from chorismate: step 5/5. The beta subunit is responsible for the synthesis of L-tryptophan from indole and L-serine. This Sulfurisphaera tokodaii (strain DSM 16993 / JCM 10545 / NBRC 100140 / 7) (Sulfolobus tokodaii) protein is Tryptophan synthase beta chain 1 (trpB1).